A 162-amino-acid chain; its full sequence is MEGIMKKFFALMTLIAGISFSLDFACVDTNKVIRESKFIAKAQTELRKELEKYQKLIQEKQKKLEALKKSLESKALSEKAKEKKAKEIEQLEDELRKLQVEAQSKLSRKKAELEKMVFDKVIKIVESTAKKKKIKAVFDCNSMLYWDKKIDITNEVLKELDK.

A signal peptide spans 1–21 (MEGIMKKFFALMTLIAGISFS). Positions 32 to 118 (VIRESKFIAK…KKAELEKMVF (87 aa)) form a coiled coil.

It belongs to the Skp family.

This is an uncharacterized protein from Aquifex aeolicus (strain VF5).